The following is a 236-amino-acid chain: Phospholipid hydroperoxide glutathione peroxidase, chloroplastic (236 aa).

The N-terminal 64 residues, 1–64 (MASMAFSTTF…SNFPIVPSKT (64 aa)), are a transit peptide targeting the chloroplast. The active site involves C111.

This sequence belongs to the glutathione peroxidase family.

The protein resides in the plastid. Its subcellular location is the chloroplast stroma. It carries out the reaction a hydroperoxy polyunsaturated fatty acid + 2 glutathione = a hydroxy polyunsaturated fatty acid + glutathione disulfide + H2O. In terms of biological role, protects cells and enzymes from oxidative damage, by catalyzing the reduction of hydrogen peroxide, lipid peroxides and organic hydroperoxide, by glutathione. This chain is Phospholipid hydroperoxide glutathione peroxidase, chloroplastic, found in Pisum sativum (Garden pea).